A 527-amino-acid chain; its full sequence is Glutamate--cysteine ligase (527 aa).

Belongs to the glutamate--cysteine ligase type 1 family. Type 1 subfamily.

It carries out the reaction L-cysteine + L-glutamate + ATP = gamma-L-glutamyl-L-cysteine + ADP + phosphate + H(+). The protein operates within sulfur metabolism; glutathione biosynthesis; glutathione from L-cysteine and L-glutamate: step 1/2. The protein is Glutamate--cysteine ligase of Pseudomonas aeruginosa (strain LESB58).